A 244-amino-acid chain; its full sequence is NH(3)-dependent NAD(+) synthetase (244 aa).

An ATP-binding site is contributed by 29-36 (GISGGIDS). D35 is a binding site for Mg(2+). R113 contributes to the deamido-NAD(+) binding site. Position 133 (T133) interacts with ATP. A Mg(2+)-binding site is contributed by E138. 2 residues coordinate deamido-NAD(+): K146 and D153. Positions 162 and 184 each coordinate ATP. A deamido-NAD(+)-binding site is contributed by 230 to 231 (HK).

It belongs to the NAD synthetase family. As to quaternary structure, homodimer.

It catalyses the reaction deamido-NAD(+) + NH4(+) + ATP = AMP + diphosphate + NAD(+) + H(+). It functions in the pathway cofactor biosynthesis; NAD(+) biosynthesis; NAD(+) from deamido-NAD(+) (ammonia route): step 1/1. Functionally, catalyzes the ATP-dependent amidation of deamido-NAD to form NAD. Uses ammonia as a nitrogen source. This chain is NH(3)-dependent NAD(+) synthetase, found in Mesoplasma florum (strain ATCC 33453 / NBRC 100688 / NCTC 11704 / L1) (Acholeplasma florum).